Consider the following 324-residue polypeptide: MSQKTPSPPGELKRDIRALKGASKVARIPVKVEPTTERQRKPHWIRAKAPIGPEVLRLKGLLREHRLHTVCEEASCPNLGECFGHGTATFLIMGNICTRRCPFCDVAHGRPDPLDAEEPMHLAQAIGAMGLRHVVVTSVDRDDLRDGGAAHFTHCIQAIRTQSPQTRIEVLVPDFRGRMDRALEALTAGPPDIFNHNLETVPRLYKAVRPGADYLWSLRLLARFKEDHPTVPTKSGLMLGLGEELAEVEQVMKDLRDHGCDMLTLGQYLQPSLYHLPVRRFVTPEEFDGLGDKAREMGFTHVASGPMVRSSYHADRQAAGESVV.

7 residues coordinate [4Fe-4S] cluster: Cys-71, Cys-76, Cys-82, Cys-97, Cys-101, Cys-104, and Ser-311. Residues 83–300 enclose the Radical SAM core domain; that stretch reads FGHGTATFLI…GDKAREMGFT (218 aa).

This sequence belongs to the radical SAM superfamily. Lipoyl synthase family. Requires [4Fe-4S] cluster as cofactor.

It is found in the cytoplasm. The enzyme catalyses [[Fe-S] cluster scaffold protein carrying a second [4Fe-4S](2+) cluster] + N(6)-octanoyl-L-lysyl-[protein] + 2 oxidized [2Fe-2S]-[ferredoxin] + 2 S-adenosyl-L-methionine + 4 H(+) = [[Fe-S] cluster scaffold protein] + N(6)-[(R)-dihydrolipoyl]-L-lysyl-[protein] + 4 Fe(3+) + 2 hydrogen sulfide + 2 5'-deoxyadenosine + 2 L-methionine + 2 reduced [2Fe-2S]-[ferredoxin]. The protein operates within protein modification; protein lipoylation via endogenous pathway; protein N(6)-(lipoyl)lysine from octanoyl-[acyl-carrier-protein]: step 2/2. Catalyzes the radical-mediated insertion of two sulfur atoms into the C-6 and C-8 positions of the octanoyl moiety bound to the lipoyl domains of lipoate-dependent enzymes, thereby converting the octanoylated domains into lipoylated derivatives. The sequence is that of Lipoyl synthase from Nitrosococcus oceani (strain ATCC 19707 / BCRC 17464 / JCM 30415 / NCIMB 11848 / C-107).